A 116-amino-acid polypeptide reads, in one-letter code: Large ribosomal subunit protein bL17 (116 aa).

Belongs to the bacterial ribosomal protein bL17 family. Part of the 50S ribosomal subunit. Contacts protein L32.

This Trichodesmium erythraeum (strain IMS101) protein is Large ribosomal subunit protein bL17.